Consider the following 461-residue polypeptide: Asparagine--tRNA ligase (461 aa).

Belongs to the class-II aminoacyl-tRNA synthetase family. Homodimer.

The protein resides in the cytoplasm. The catalysed reaction is tRNA(Asn) + L-asparagine + ATP = L-asparaginyl-tRNA(Asn) + AMP + diphosphate + H(+). The protein is Asparagine--tRNA ligase of Geotalea uraniireducens (strain Rf4) (Geobacter uraniireducens).